A 386-amino-acid chain; its full sequence is Protein U3 (386 aa).

The polypeptide is Protein U3 (U3) (Human herpesvirus 6B (strain Z29) (HHV-6 variant B)).